Reading from the N-terminus, the 840-residue chain is Leucine--tRNA ligase (840 aa).

The 'HIGH' region motif lies at 44–55; that stretch reads PYPSANGLHVGH. The short motif at 617–621 is the 'KMSKS' region element; sequence KMSKS. Lys620 provides a ligand contact to ATP.

This sequence belongs to the class-I aminoacyl-tRNA synthetase family.

It is found in the cytoplasm. The catalysed reaction is tRNA(Leu) + L-leucine + ATP = L-leucyl-tRNA(Leu) + AMP + diphosphate. The protein is Leucine--tRNA ligase of Borreliella afzelii (strain PKo) (Borrelia afzelii).